The primary structure comprises 242 residues: EF-hand domain-containing protein D2 (242 aa).

The segment at 1-53 (MATDELASKLSRRLQMEGEGGGEAPEQPGLNGAAAAAAAAGAPDETAEALGSA) is disordered. Alanine 2 carries the N-acetylalanine modification. Position 11 is a phosphoserine (serine 11). Over residues 32–42 (GAAAAAAAAGA) the composition is skewed to low complexity. 2 positions are modified to phosphoserine: serine 76 and serine 78. Tyrosine 85 bears the Phosphotyrosine mark. EF-hand domains are found at residues 94–129 (KQIK…LGAP) and 130–165 (QTHL…AAAG). Positions 107, 111, 118, 143, 145, 147, 149, and 154 each coordinate Ca(2+). Lysine 235 carries the N6-acetyllysine modification.

As to quaternary structure, interacts with CASP9; with inactive form.

Its subcellular location is the membrane raft. Its function is as follows. May regulate B-cell receptor (BCR)-induced immature and primary B-cell apoptosis. Plays a role as negative regulator of the canonical NF-kappa-B-activating branch. Controls spontaneous apoptosis through the regulation of BCL2L1 abundance. This Bos taurus (Bovine) protein is EF-hand domain-containing protein D2 (EFHD2).